The sequence spans 339 residues: DNA-directed RNA polymerase subunit alpha (339 aa).

The alpha N-terminal domain (alpha-NTD) stretch occupies residues 1–233 (MVREKVRIST…DLFIPFLHAE (233 aa)). The interval 267 to 339 (IALKSIFIDQ…FTINLPKNKF (73 aa)) is alpha C-terminal domain (alpha-CTD).

It belongs to the RNA polymerase alpha chain family. As to quaternary structure, in plastids the minimal PEP RNA polymerase catalytic core is composed of four subunits: alpha, beta, beta', and beta''. When a (nuclear-encoded) sigma factor is associated with the core the holoenzyme is formed, which can initiate transcription.

It localises to the plastid. The protein localises to the chloroplast. The catalysed reaction is RNA(n) + a ribonucleoside 5'-triphosphate = RNA(n+1) + diphosphate. Its function is as follows. DNA-dependent RNA polymerase catalyzes the transcription of DNA into RNA using the four ribonucleoside triphosphates as substrates. In Populus alba (White poplar), this protein is DNA-directed RNA polymerase subunit alpha.